The chain runs to 465 residues: Sensor histidine kinase ZraS (465 aa).

Topologically, residues 1–14 (MRFMQRSKDSLAKW) are cytoplasmic. A helical membrane pass occupies residues 15-35 (LSAILPVVIVGLVGLFAVTVI). Over 36-201 (RDYGRASEAD…ATQSGEKRNT (166 aa)) the chain is Periplasmic. The chain crosses the membrane as a helical span at residues 202–222 (LIILFALATVLLASVLSFFWY). Over 223 to 465 (RRYLRSRQLL…VNITRKDPQG (243 aa)) the chain is Cytoplasmic. The Histidine kinase domain occupies 251–458 (GVAHEIRNPL…TFTLWLPVNI (208 aa)). Position 254 is a phosphohistidine; by autocatalysis (H254).

Autophosphorylated.

It localises to the cell inner membrane. It carries out the reaction ATP + protein L-histidine = ADP + protein N-phospho-L-histidine.. Its activity is regulated as follows. Activity of the ZraS/ZraR two-component system is repressed by the zinc-bound form of ZraP, which probably interacts with the periplasmic region of ZraS. Functionally, part of the Zra signaling pathway, an envelope stress response (ESR) system composed of the periplasmic accessory protein ZraP, the histidine kinase ZraS and the transcriptional regulator ZraR. The ZraPSR system contributes to antibiotic resistance and is important for membrane integrity in the presence of membrane-targeting biocides. ZraS is a member of the two-component regulatory system ZraS/ZraR. Functions as a membrane-associated sensor kinase that phosphorylates ZraR in response to high concentrations of Zn(2+) or Pb(2+) in the medium. Binds one zinc molecule with high affinity via its periplasmic domain, inducing a conformational change that is transmitted to the histidine kinase domain and leads to the activation of ZraR. The system has no direct role in zinc or copper resistance. This chain is Sensor histidine kinase ZraS, found in Escherichia coli (strain K12).